The following is a 259-amino-acid chain: uncharacterized protein (259 aa).

In terms of domain architecture, HD spans 51–173 (GKTHAKIVAN…IAVADGTDMT (123 aa)).

This is an uncharacterized protein from Methanocaldococcus jannaschii (strain ATCC 43067 / DSM 2661 / JAL-1 / JCM 10045 / NBRC 100440) (Methanococcus jannaschii).